We begin with the raw amino-acid sequence, 506 residues long: MRWITRPGWPGNLLALAAGGLTTLALAPFDFWPLVLVSVAMFYLGLRELSPRQALARGWCYGFGLYGAGTSWIYVSIHTYGGASALLAGLLMLLFIAAIALFFALPAWVWARWLRRNEAPLADSLAFAALWLWQEAFRGWFLTGFPWLYSGYSQLDAPLAGLAPVGGVWLISFALGLTAALLCNLHRLRARKSFLAMGVLLLLAPWVAGLALKDHAWTSPSGPPLKVAAMQGNIEQSMKWDPQKLNDQLALYRDMTFRSQQADLIVWPETAVPVLKESAEGYLSMMGKFAADRGAALITGVPVREPTGRGEYSYYNGITVTGQGDGTYFKQKLVPFGEYVPLQDLLRGLISFFDLPMSDFARGPNDQALLQAKGYHIAPFICYEVVYPEFAAGLSAQSDLLLTVSNDTWFGTSIGPLQHLQMAQMRALEAGRWMIRATNNGVTALIDPFGRITVQIPQFERGVLYGEVVPMHELTPYLHWRSWPLAIVCLLLFGWALLAARISKTV.

A run of 6 helical transmembrane segments spans residues 24–44 (LALA…MFYL), 58–78 (GWCY…VSIH), 85–105 (ALLA…FFAL), 125–145 (LAFA…LTGF), 162–182 (LAPV…AALL), and 192–212 (KSFL…GLAL). The region spanning 230–470 (MQGNIEQSMK…RGVLYGEVVP (241 aa)) is the CN hydrolase domain. Glutamate 269 functions as the Proton acceptor in the catalytic mechanism. Lysine 330 is an active-site residue. Cysteine 382 acts as the Nucleophile in catalysis. Residues 482–502 (SWPLAIVCLLLFGWALLAARI) traverse the membrane as a helical segment.

Belongs to the CN hydrolase family. Apolipoprotein N-acyltransferase subfamily.

The protein resides in the cell inner membrane. It carries out the reaction N-terminal S-1,2-diacyl-sn-glyceryl-L-cysteinyl-[lipoprotein] + a glycerophospholipid = N-acyl-S-1,2-diacyl-sn-glyceryl-L-cysteinyl-[lipoprotein] + a 2-acyl-sn-glycero-3-phospholipid + H(+). It functions in the pathway protein modification; lipoprotein biosynthesis (N-acyl transfer). Functionally, catalyzes the phospholipid dependent N-acylation of the N-terminal cysteine of apolipoprotein, the last step in lipoprotein maturation. The polypeptide is Apolipoprotein N-acyltransferase (Pseudomonas syringae pv. tomato (strain ATCC BAA-871 / DC3000)).